The sequence spans 60 residues: Large ribosomal subunit protein uL30 (60 aa).

Belongs to the universal ribosomal protein uL30 family. In terms of assembly, part of the 50S ribosomal subunit.

This Paracidovorax citrulli (strain AAC00-1) (Acidovorax citrulli) protein is Large ribosomal subunit protein uL30.